A 211-amino-acid polypeptide reads, in one-letter code: Large ribosomal subunit protein uL4 (211 aa).

Residues 48-89 (KRAGTASTKTRVEVRGGGAKPWRQKGTGRARAGSRTSPLWRG) are disordered.

Belongs to the universal ribosomal protein uL4 family. Part of the 50S ribosomal subunit.

Its function is as follows. One of the primary rRNA binding proteins, this protein initially binds near the 5'-end of the 23S rRNA. It is important during the early stages of 50S assembly. It makes multiple contacts with different domains of the 23S rRNA in the assembled 50S subunit and ribosome. Forms part of the polypeptide exit tunnel. This is Large ribosomal subunit protein uL4 from Desulfotalea psychrophila (strain LSv54 / DSM 12343).